Here is a 238-residue protein sequence, read N- to C-terminus: Ribonuclease PH (238 aa).

Phosphate contacts are provided by residues Arg-86 and 124–126; that span reads GTR.

It belongs to the RNase PH family. In terms of assembly, homohexameric ring arranged as a trimer of dimers.

The catalysed reaction is tRNA(n+1) + phosphate = tRNA(n) + a ribonucleoside 5'-diphosphate. Its function is as follows. Phosphorolytic 3'-5' exoribonuclease that plays an important role in tRNA 3'-end maturation. Removes nucleotide residues following the 3'-CCA terminus of tRNAs; can also add nucleotides to the ends of RNA molecules by using nucleoside diphosphates as substrates, but this may not be physiologically important. Probably plays a role in initiation of 16S rRNA degradation (leading to ribosome degradation) during starvation. The sequence is that of Ribonuclease PH from Psychrobacter sp. (strain PRwf-1).